The primary structure comprises 538 residues: [Pyruvate dehydrogenase [acetyl-transferring]]-phosphatase 1, mitochondrial (538 aa).

Residues Met-1 to Tyr-71 constitute a mitochondrion transit peptide. The PPM-type phosphatase domain maps to Ile-109–Phe-525. The Mn(2+) site is built by Asp-144 and Gly-145. Lys-202 carries the post-translational modification N6-acetyllysine. Asp-418 and Asp-516 together coordinate Mn(2+).

It belongs to the PP2C family. As to quaternary structure, heterodimer of a catalytic (PDP1) and a regulatory (PDPR) subunit. Mn(2+) is required as a cofactor. Requires Mg(2+) as cofactor.

Its subcellular location is the mitochondrion. It carries out the reaction O-phospho-L-seryl-[pyruvate dehydrogenase E1 alpha subunit] + H2O = L-seryl-[pyruvate dehydrogenase E1 alpha subunit] + phosphate. Its activity is regulated as follows. Magnesium-dependent and calcium-stimulated. PDP1 activity strongly depends on its Ca(2+)-dependent binding to the lipoyl domain of E2 subunit of component of the pyruvate dehydrogenase complex. In terms of biological role, mitochondrial enzyme that catalyzes the dephosphorylation and concomitant reactivation of the alpha subunit of the E1 component of the pyruvate dehydrogenase complex (PDC), thereby stimulating the conversion of pyruvate into acetyl-CoA. In Mus musculus (Mouse), this protein is [Pyruvate dehydrogenase [acetyl-transferring]]-phosphatase 1, mitochondrial (Pdp1).